Consider the following 99-residue polypeptide: NADH-quinone oxidoreductase subunit K (99 aa).

The next 3 helical transmembrane spans lie at 3–23, 28–48, and 59–79; these read PANY…GVLV, IVVF…LVTF, and VMAF…LAII.

This sequence belongs to the complex I subunit 4L family. As to quaternary structure, NDH-1 is composed of 14 different subunits. Subunits NuoA, H, J, K, L, M, N constitute the membrane sector of the complex.

The protein localises to the cell membrane. The catalysed reaction is a quinone + NADH + 5 H(+)(in) = a quinol + NAD(+) + 4 H(+)(out). Functionally, NDH-1 shuttles electrons from NADH, via FMN and iron-sulfur (Fe-S) centers, to quinones in the respiratory chain. The immediate electron acceptor for the enzyme in this species is believed to be a menaquinone. Couples the redox reaction to proton translocation (for every two electrons transferred, four hydrogen ions are translocated across the cytoplasmic membrane), and thus conserves the redox energy in a proton gradient. The chain is NADH-quinone oxidoreductase subunit K from Frankia alni (strain DSM 45986 / CECT 9034 / ACN14a).